Here is a 413-residue protein sequence, read N- to C-terminus: Tyrosine--tRNA ligase (413 aa).

The short motif at 59-68 (PTAPDIHLGH) is the 'HIGH' region element. Residues 243–247 (KMSKS) carry the 'KMSKS' region motif. Residue lysine 246 participates in ATP binding. One can recognise an S4 RNA-binding domain in the interval 351-411 (LAIGQLLKQA…GKRRFARVTL (61 aa)).

The protein belongs to the class-I aminoacyl-tRNA synthetase family. TyrS type 2 subfamily. Homodimer.

It localises to the cytoplasm. It carries out the reaction tRNA(Tyr) + L-tyrosine + ATP = L-tyrosyl-tRNA(Tyr) + AMP + diphosphate + H(+). Catalyzes the attachment of tyrosine to tRNA(Tyr) in a two-step reaction: tyrosine is first activated by ATP to form Tyr-AMP and then transferred to the acceptor end of tRNA(Tyr). This Burkholderia mallei (strain ATCC 23344) protein is Tyrosine--tRNA ligase.